The sequence spans 90 residues: UPF0335 protein R02793 (90 aa).

It belongs to the UPF0335 family.

This chain is UPF0335 protein R02793, found in Rhizobium meliloti (strain 1021) (Ensifer meliloti).